Here is a 219-residue protein sequence, read N- to C-terminus: Peroxiredoxin (219 aa).

The Thioredoxin domain maps to 2–164 (PLIGDDAPSF…IKRIVVALQK (163 aa)). Cys44 serves as the catalytic Cysteine sulfenic acid (-SOH) intermediate. Position 127 (Arg127) interacts with substrate. Cys206 and Cys212 are oxidised to a cystine.

The protein belongs to the peroxiredoxin family. Prx6 subfamily. In terms of assembly, homodecamer. Pentamer of dimers that assemble into a ring structure.

Its subcellular location is the cytoplasm. The enzyme catalyses a hydroperoxide + [thioredoxin]-dithiol = an alcohol + [thioredoxin]-disulfide + H2O. Its function is as follows. Thiol-specific peroxidase that catalyzes the reduction of hydrogen peroxide and organic hydroperoxides to water and alcohols, respectively. Plays a role in cell protection against oxidative stress by detoxifying peroxides. The polypeptide is Peroxiredoxin (Methanosarcina mazei (strain ATCC BAA-159 / DSM 3647 / Goe1 / Go1 / JCM 11833 / OCM 88) (Methanosarcina frisia)).